We begin with the raw amino-acid sequence, 361 residues long: Flagellar P-ring protein (361 aa).

Residues 1–18 (MRKFTILLMLLLASSAQA) form the signal peptide.

This sequence belongs to the FlgI family. The basal body constitutes a major portion of the flagellar organelle and consists of four rings (L,P,S, and M) mounted on a central rod.

It localises to the periplasm. It is found in the bacterial flagellum basal body. In terms of biological role, assembles around the rod to form the L-ring and probably protects the motor/basal body from shearing forces during rotation. The sequence is that of Flagellar P-ring protein from Vibrio cholerae serotype O1 (strain ATCC 39541 / Classical Ogawa 395 / O395).